The following is a 333-amino-acid chain: Dehydrodolichyl diphosphate synthase complex subunit Dhdds (333 aa).

5 residues coordinate (2E,6E)-farnesyl diphosphate: aspartate 34, glycine 35, arginine 37, arginine 38, and arginine 85. Residue aspartate 34 coordinates Mg(2+). Isopentenyl diphosphate contacts are provided by arginine 38, arginine 85, arginine 205, arginine 211, and serine 213.

This sequence belongs to the UPP synthase family. The active dehydrodolichyl diphosphate synthase complex is a heterotetramer composed of a dimer of heterodimer of DHDDS and NUS1. Interacts with NPC2. Requires Mg(2+) as cofactor.

It is found in the endoplasmic reticulum membrane. It catalyses the reaction n isopentenyl diphosphate + (2E,6E)-farnesyl diphosphate = a di-trans,poly-cis-polyprenyl diphosphate + n diphosphate. The protein operates within protein modification; protein glycosylation. It participates in lipid metabolism. In terms of biological role, with NUS1, forms the dehydrodolichyl diphosphate synthase (DDS) complex, an essential component of the dolichol monophosphate (Dol-P) biosynthetic machinery. Both subunits contribute to enzymatic activity, i.e. condensation of multiple copies of isopentenyl pyrophosphate (IPP) to farnesyl pyrophosphate (FPP) to produce dehydrodolichyl diphosphate (Dedol-PP), a precursor of dolichol phosphate which is utilized as a sugar carrier in protein glycosylation in the endoplasmic reticulum (ER). Synthesizes long-chain polyprenols, mostly of C95 and C100 chain length. Regulates the glycosylation and stability of nascent NPC2, thereby promoting trafficking of LDL-derived cholesterol. The polypeptide is Dehydrodolichyl diphosphate synthase complex subunit Dhdds (Mus musculus (Mouse)).